A 744-amino-acid chain; its full sequence is Protein zyg-11 homolog B (744 aa).

3 LRR repeats span residues 185 to 208 (LPRL…LACK), 216 to 236 (MHHL…VREL), and 237 to 261 (KHLN…LLEQ).

Belongs to the zyg-11 family. Interacts with ELOC/Elongin C. Part of an E3 ubiquitin ligase complex including ZYG11B, CUL2 and Elongin BC.

Its function is as follows. Serves as substrate adapter subunit in the E3 ubiquitin ligase complex ZYG11B-CUL2-Elongin BC. Acts redudantly with ZER1 to target substrates bearing N-terminal glycine degrons for proteasomal degradation. Involved in the clearance of proteolytic fragments generated by caspase cleavage during apoptosis since N-terminal glycine degrons are strongly enriched at caspase cleavage sites. Also important in the quality control of protein N-myristoylation in which N-terminal glycine degrons are conditionally exposed after a failure of N-myristoylation. The polypeptide is Protein zyg-11 homolog B (Mus musculus (Mouse)).